The sequence spans 483 residues: ATP synthase subunit beta (483 aa).

167–174 (GGAGVGKT) contacts ATP.

Belongs to the ATPase alpha/beta chains family. F-type ATPases have 2 components, CF(1) - the catalytic core - and CF(0) - the membrane proton channel. CF(1) has five subunits: alpha(3), beta(3), gamma(1), delta(1), epsilon(1). CF(0) has three main subunits: a(1), b(2) and c(9-12). The alpha and beta chains form an alternating ring which encloses part of the gamma chain. CF(1) is attached to CF(0) by a central stalk formed by the gamma and epsilon chains, while a peripheral stalk is formed by the delta and b chains.

The protein resides in the cell membrane. It carries out the reaction ATP + H2O + 4 H(+)(in) = ADP + phosphate + 5 H(+)(out). Its function is as follows. Produces ATP from ADP in the presence of a proton gradient across the membrane. The catalytic sites are hosted primarily by the beta subunits. This chain is ATP synthase subunit beta, found in Paenarthrobacter aurescens (strain TC1).